The sequence spans 247 residues: Carboxy-S-adenosyl-L-methionine synthase (247 aa).

S-adenosyl-L-methionine contacts are provided by residues Tyr39, 64 to 66 (GCS), 89 to 90 (DN), 117 to 118 (DI), Asn132, and Arg199.

Belongs to the class I-like SAM-binding methyltransferase superfamily. Cx-SAM synthase family. Homodimer.

It catalyses the reaction prephenate + S-adenosyl-L-methionine = carboxy-S-adenosyl-L-methionine + 3-phenylpyruvate + H2O. Functionally, catalyzes the conversion of S-adenosyl-L-methionine (SAM) to carboxy-S-adenosyl-L-methionine (Cx-SAM). The protein is Carboxy-S-adenosyl-L-methionine synthase of Salmonella agona (strain SL483).